The primary structure comprises 362 residues: Leucoanthocyanidin dioxygenase (362 aa).

Residues 1–23 (MVTSAMGPSPRVEELARSGLDTI) are disordered. The Fe2OG dioxygenase domain occupies 214 to 313 (LIVQMKINFY…RISWAVFCEP (100 aa)). Fe cation-binding residues include H238, D240, and H294. R304 is a catalytic residue.

The protein belongs to the iron/ascorbate-dependent oxidoreductase family. Fe cation is required as a cofactor. The cofactor is L-ascorbate. Expressed in red but not in green forma of P.frutescens. In red forma, it is predominantly expressed in stems and leaves, but not in roots.

It carries out the reaction a (2R,3S,4S)-leucoanthocyanidin + 2-oxoglutarate + O2 = a 4-H-anthocyanidin with a 3-hydroxy group + succinate + CO2 + 2 H2O. Its pathway is pigment biosynthesis; anthocyanin biosynthesis. Its function is as follows. Oxidation of leucoanthocyanidins into anthocyanidins. In Perilla frutescens (Beefsteak mint), this protein is Leucoanthocyanidin dioxygenase (ANS).